Reading from the N-terminus, the 110-residue chain is Membrane-associated protein slr1513 (110 aa).

It is found in the cellular thylakoid membrane. The protein localises to the cell membrane. The sequence is that of Membrane-associated protein slr1513 from Synechocystis sp. (strain ATCC 27184 / PCC 6803 / Kazusa).